A 113-amino-acid chain; its full sequence is U11-theraphotoxin-Hhn1a (113 aa).

The first 21 residues, methionine 1–alanine 21, serve as a signal peptide directing secretion. The propeptide occupies aspartate 22–arginine 74. Positions glutamate 61–aspartate 83 are disordered. Cystine bridges form between cysteine 75–cysteine 90, cysteine 82–cysteine 95, and cysteine 89–cysteine 110.

It belongs to the neurotoxin 14 (magi-1) family. 01 (HNTX-16) subfamily. In terms of tissue distribution, expressed by the venom gland.

It localises to the secreted. In terms of biological role, probable ion channel inhibitor. The sequence is that of U11-theraphotoxin-Hhn1a from Cyriopagopus hainanus (Chinese bird spider).